A 253-amino-acid polypeptide reads, in one-letter code: uncharacterized protein (253 aa).

Helical transmembrane passes span Met17–Ala37, Ile46–Phe66, Leu93–Trp113, Met139–Phe159, Ala172–Val192, and Ile222–Met242.

Its subcellular location is the cell membrane. This is an uncharacterized protein from Bacillus subtilis (strain 168).